The chain runs to 1052 residues: MDSSLLQAIEEIEKFFQHLSERHTEQAETPDAPEPQNCMPLTAHAEESQHESTQSKTMPPLGSTMMTSACTNIPGTVLTQDLTMHPLKALEDLSETYSMGQKVTSFDQVKHTAGSQMTDVTVTPKSSPTDCQKTTITASNMTISNESSQLNTPSSDQTLNESQIPALLGDQMKTLSDNQTLCGDQVTFSSDQTLTDGHTVTSGSDETLSGGQMTTSLDLYGGQMMTSIDNQTLCGEQMTTSSGNQAFYGRQMTTSTGNQTLCGEQMTTSTGNQALYGGQMTTSASNQTLCGEQMTTSTSNQTLCGEQVMTSTGNQALCGGQMTTSTGNQNLYGGQMMTSTGNQTLYWGQMMTSTGNQNLCGEQVMTSTGNQALCGGQMTTSTGNQNLYGGQMMTSTGNQTLYWGQMMTSTGNQNLCGEQVMTSTGNQALCGGQMTTSTGNQNLCGEQVMTSTSNQTLCGEQTTTSTSNQTLCGEQVTTSTGNQALYGGQMMTSTGNQTLYWGQMMTSTGNQNLCGEQMTTSTGNQALYGGQMTTSTSNQTLCGEQMTTPTSNQTLCGEQVTTSTGNQALYGGQITTSTSNQTLCGEQMTTSTSNQTLCGEQVTTSTGNQALYGGQMMTSTGNQALYGGQMTTSASNQTLCGEQMTTSTSNQTLCEEQVMTSTGNQALCGEQMTTSTGNQALYGGQMTTSTSNQTLCGEQTTTSTSNQTLCGEQVTTSTGNQALYGGQMMTSTGNQTLYWGQMMTSTGNQNLCGEQMTTSTGNQALYGGQMTTSTSNQTLCGEQMTTPTSNQTLCGEQVTTSTGNQALYRGQITTSTSNQTLCGEQMTTSTSNQTLCGEQVTTSTGNQALYGGQMMTSTGNQNLYGGQNMTSTDNQALYGGQMATYSGNQTLYGDQMLTLQVGNMTTLTDDHSLYGGYMMSHQFSSLPYPGFLCFSSSHLIQGQLPKQKTQSCQFWKNPEVSRPYVCTYEDCKMSYSKACHLRTHMRKHTGEKPYVCDVEGCTWKFARSDELNRHKKRHTGERPYLCSICSKNFARSDHLKQHAKVHNIRPGL.

C2H2-type zinc fingers lie at residues Y964 to H988, Y994 to H1018, and Y1024 to H1046.

It belongs to the krueppel C2H2-type zinc-finger protein family.

Its subcellular location is the nucleus. The sequence is that of Kruppel-like factor 18 from Homo sapiens (Human).